We begin with the raw amino-acid sequence, 280 residues long: Putative pyruvate, phosphate dikinase regulatory protein (280 aa).

147–154 (GASRSSKT) contacts ADP.

This sequence belongs to the pyruvate, phosphate/water dikinase regulatory protein family. PDRP subfamily.

The enzyme catalyses N(tele)-phospho-L-histidyl/L-threonyl-[pyruvate, phosphate dikinase] + ADP = N(tele)-phospho-L-histidyl/O-phospho-L-threonyl-[pyruvate, phosphate dikinase] + AMP + H(+). It catalyses the reaction N(tele)-phospho-L-histidyl/O-phospho-L-threonyl-[pyruvate, phosphate dikinase] + phosphate + H(+) = N(tele)-phospho-L-histidyl/L-threonyl-[pyruvate, phosphate dikinase] + diphosphate. Bifunctional serine/threonine kinase and phosphorylase involved in the regulation of the pyruvate, phosphate dikinase (PPDK) by catalyzing its phosphorylation/dephosphorylation. The sequence is that of Putative pyruvate, phosphate dikinase regulatory protein from Pelobacter propionicus (strain DSM 2379 / NBRC 103807 / OttBd1).